Reading from the N-terminus, the 60-residue chain is Ixodegrin-Ip (60 aa).

The N-terminal stretch at 1–21 (MNAAFIAALFILGALTLDAMA) is a signal peptide. A Cell attachment site motif is present at residues 49–51 (RGD).

The protein belongs to the ixodegrin family. Post-translationally, contains 3 disulfide bonds. In terms of tissue distribution, expressed in salivary glands.

The protein localises to the secreted. Tick salivary platelet aggregation inhibitor that plays an important part in the anti-hemostatic strategy of ticks. Inhibits platelet aggregation induced by ADP, thrombin and thromboxane A2 (TXA2). Blocks platelet adhesion to soluble collagen (most probably through the binding to alpha-2/beta-1 integrin (ITGA2/ITGB1)) and binds to purified glycoprotein IIb/IIIa (ITGA2B/ITGB3) in a dose-dependent manner. In vivo, reduces thrombus weight effectively in a rat arteriovenous shunt model and inhibits thrombosis in a carrageenan-induced mouse tail thrombosis model. The protein is Ixodegrin-Ip of Ixodes pacificus (Western black-legged tick).